The primary structure comprises 87 residues: Small ribosomal subunit protein uS15 (87 aa).

The protein belongs to the universal ribosomal protein uS15 family. Part of the 30S ribosomal subunit. Forms a bridge to the 50S subunit in the 70S ribosome, contacting the 23S rRNA.

One of the primary rRNA binding proteins, it binds directly to 16S rRNA where it helps nucleate assembly of the platform of the 30S subunit by binding and bridging several RNA helices of the 16S rRNA. Functionally, forms an intersubunit bridge (bridge B4) with the 23S rRNA of the 50S subunit in the ribosome. This chain is Small ribosomal subunit protein uS15, found in Acetivibrio thermocellus (strain ATCC 27405 / DSM 1237 / JCM 9322 / NBRC 103400 / NCIMB 10682 / NRRL B-4536 / VPI 7372) (Clostridium thermocellum).